Reading from the N-terminus, the 496-residue chain is Endoglucanase (496 aa).

The signal sequence occupies residues 1–23 (MGYHSVFIAVFLWSSMVCHNGLA). Catalysis depends on D93, which acts as the Nucleophile. Active-site residues include H415, D467, and E476.

The protein belongs to the glycosyl hydrolase 9 (cellulase E) family.

It catalyses the reaction Endohydrolysis of (1-&gt;4)-beta-D-glucosidic linkages in cellulose, lichenin and cereal beta-D-glucans.. In terms of biological role, involved in ripening fruit process. The polypeptide is Endoglucanase (Phaseolus vulgaris (Kidney bean)).